The following is a 271-amino-acid chain: WUSCHEL-related homeobox 6 (271 aa).

The segment at residues Ala57 to Arg121 is a DNA-binding region (homeobox; WUS-type). The interval Arg118 to Glu195 is disordered. Basic and acidic residues-rich tracts occupy residues Pro132–Gln148 and Asn180–Glu195.

The protein belongs to the WUS homeobox family. In terms of tissue distribution, highly expressed in developing ovules. Present in developing primordia and differentiating organs but absent in mature organs.

The protein resides in the nucleus. Transcription factor that plays a central role in ovule patterning by regulating cell proliferation of the maternal integuments and differentiation of the maegaspore mother cell (MCC). Involved in AGAMOUS (AG) repression in leaves. The protein is WUSCHEL-related homeobox 6 (WOX6) of Arabidopsis thaliana (Mouse-ear cress).